Reading from the N-terminus, the 305-residue chain is Acetyl-coenzyme A carboxylase carboxyl transferase subunit alpha (305 aa).

Positions 33–280 constitute a CoA carboxyltransferase C-terminal domain; the sequence is AKLESSTALS…KEQILKDLAD (248 aa).

It belongs to the AccA family. As to quaternary structure, acetyl-CoA carboxylase is a heterohexamer composed of biotin carboxyl carrier protein (AccB), biotin carboxylase (AccC) and two subunits each of ACCase subunit alpha (AccA) and ACCase subunit beta (AccD).

The protein localises to the cytoplasm. The enzyme catalyses N(6)-carboxybiotinyl-L-lysyl-[protein] + acetyl-CoA = N(6)-biotinyl-L-lysyl-[protein] + malonyl-CoA. The protein operates within lipid metabolism; malonyl-CoA biosynthesis; malonyl-CoA from acetyl-CoA: step 1/1. In terms of biological role, component of the acetyl coenzyme A carboxylase (ACC) complex. First, biotin carboxylase catalyzes the carboxylation of biotin on its carrier protein (BCCP) and then the CO(2) group is transferred by the carboxyltransferase to acetyl-CoA to form malonyl-CoA. The polypeptide is Acetyl-coenzyme A carboxylase carboxyl transferase subunit alpha (Treponema denticola (strain ATCC 35405 / DSM 14222 / CIP 103919 / JCM 8153 / KCTC 15104)).